The sequence spans 822 residues: ATP-dependent zinc metalloprotease FTSH 7, chloroplastic (822 aa).

Low complexity-rich tracts occupy residues 1 to 34, 80 to 94, and 101 to 122; these read MASA…RRAS, AEAS…SSSG, and AAAA…AAAT. 2 disordered regions span residues 1–44 and 67–136; these read MASA…ASVR and PAAR…ENKW. The N-terminal 70 residues, 1–70, are a transit peptide targeting the chloroplast; it reads MASASAAAET…RVLRRPPAAR (70 aa). Transmembrane regions (helical) follow at residues 154–174 and 288–308; these read IVQG…IFAL and GGLL…AVVL. 386-393 is a binding site for ATP; the sequence is GLPGTGKT. Residue H611 coordinates Zn(2+). Residue E612 is part of the active site. The Zn(2+) site is built by H615 and D694.

The protein in the N-terminal section; belongs to the AAA ATPase family. It in the C-terminal section; belongs to the peptidase M41 family. Requires Zn(2+) as cofactor.

It is found in the plastid. It localises to the chloroplast thylakoid membrane. In terms of biological role, probable ATP-dependent zinc metallopeptidase. The sequence is that of ATP-dependent zinc metalloprotease FTSH 7, chloroplastic (FTSH7) from Oryza sativa subsp. japonica (Rice).